Consider the following 230-residue polypeptide: Large ribosomal subunit protein uL1 (230 aa).

It belongs to the universal ribosomal protein uL1 family. In terms of assembly, part of the 50S ribosomal subunit.

Binds directly to 23S rRNA. The L1 stalk is quite mobile in the ribosome, and is involved in E site tRNA release. Its function is as follows. Protein L1 is also a translational repressor protein, it controls the translation of the L11 operon by binding to its mRNA. In Caldicellulosiruptor bescii (strain ATCC BAA-1888 / DSM 6725 / KCTC 15123 / Z-1320) (Anaerocellum thermophilum), this protein is Large ribosomal subunit protein uL1.